A 347-amino-acid chain; its full sequence is Selenide, water dikinase (347 aa).

Cys-17 is a catalytic residue. Residues Lys-20 and 48–50 (TRD) contribute to the ATP site. Position 51 (Asp-51) interacts with Mg(2+). ATP contacts are provided by residues Asp-68, Asp-91, and 139–141 (GHS). Residue Asp-91 coordinates Mg(2+). Residue Asp-227 coordinates Mg(2+).

The protein belongs to the selenophosphate synthase 1 family. Class I subfamily. As to quaternary structure, homodimer. Requires Mg(2+) as cofactor.

The enzyme catalyses hydrogenselenide + ATP + H2O = selenophosphate + AMP + phosphate + 2 H(+). In terms of biological role, synthesizes selenophosphate from selenide and ATP. The polypeptide is Selenide, water dikinase (Escherichia coli O9:H4 (strain HS)).